An 875-amino-acid polypeptide reads, in one-letter code: Alanine--tRNA ligase (875 aa).

Zn(2+) contacts are provided by histidine 564, histidine 568, cysteine 666, and histidine 670.

This sequence belongs to the class-II aminoacyl-tRNA synthetase family. Homotetramer. Zn(2+) serves as cofactor.

Its subcellular location is the cytoplasm. It catalyses the reaction tRNA(Ala) + L-alanine + ATP = L-alanyl-tRNA(Ala) + AMP + diphosphate. Functionally, catalyzes the attachment of alanine to tRNA(Ala) in a two-step reaction: alanine is first activated by ATP to form Ala-AMP and then transferred to the acceptor end of tRNA(Ala). Also edits incorrectly charged Ser-tRNA(Ala) and Gly-tRNA(Ala) via its editing domain. This chain is Alanine--tRNA ligase, found in Serratia proteamaculans (strain 568).